A 101-amino-acid chain; its full sequence is Urease subunit beta (101 aa).

The protein belongs to the urease beta subunit family. As to quaternary structure, heterotrimer of UreA (gamma), UreB (beta) and UreC (alpha) subunits. Three heterotrimers associate to form the active enzyme.

It is found in the cytoplasm. It carries out the reaction urea + 2 H2O + H(+) = hydrogencarbonate + 2 NH4(+). It participates in nitrogen metabolism; urea degradation; CO(2) and NH(3) from urea (urease route): step 1/1. The polypeptide is Urease subunit beta (Pseudomonas aeruginosa (strain LESB58)).